The primary structure comprises 361 residues: Peptide chain release factor 1 (361 aa).

Gln-236 is subject to N5-methylglutamine.

Belongs to the prokaryotic/mitochondrial release factor family. In terms of processing, methylated by PrmC. Methylation increases the termination efficiency of RF1.

The protein resides in the cytoplasm. In terms of biological role, peptide chain release factor 1 directs the termination of translation in response to the peptide chain termination codons UAG and UAA. In Lactobacillus delbrueckii subsp. bulgaricus (strain ATCC BAA-365 / Lb-18), this protein is Peptide chain release factor 1.